The sequence spans 72 residues: Large ribosomal subunit protein bL31 (72 aa).

Zn(2+) is bound by residues Cys16, Cys18, Cys37, and Cys40.

It belongs to the bacterial ribosomal protein bL31 family. Type A subfamily. In terms of assembly, part of the 50S ribosomal subunit. It depends on Zn(2+) as a cofactor.

In terms of biological role, binds the 23S rRNA. The sequence is that of Large ribosomal subunit protein bL31 from Idiomarina loihiensis (strain ATCC BAA-735 / DSM 15497 / L2-TR).